We begin with the raw amino-acid sequence, 1430 residues long: 3'-5' RNA helicase YTHDC2 (1430 aa).

Residues 1-37 (MSRPSSVSPRQPAPGGGGGGGPSPCGPGGGGRAKGLK) form a disordered region. The segment covering 14-33 (PGGGGGGGPSPCGPGGGGRA) has biased composition (gly residues). Residues 38–106 (DIRIDEEVKI…NRYLTVKKKD (69 aa)) enclose the R3H domain. The region spanning 203–369 (VKIIKENKVV…FGSCPVIYIQ (167 aa)) is the Helicase ATP-binding domain. An ATP-binding site is contributed by 216–223 (GETGSGKT). The DEAH box signature appears at 316 to 319 (DEVH). 2 ANK repeats span residues 506 to 538 (TSAT…SKAS) and 539 to 571 (NGWM…FGNL). In terms of domain architecture, Helicase C-terminal spans 612–784 (LLYNICHSCD…ELCLHTKLLA (173 aa)). Phosphoserine is present on residues Ser-1089, Ser-1090, and Ser-1092. The segment covering 1164 to 1174 (EQSAGLQQPSG) has biased composition (polar residues). The tract at residues 1164 to 1288 (EQSAGLQQPS…SPSPRPNMPV (125 aa)) is disordered. Residues 1191 to 1200 (SSWRSNNSRK) are compositionally biased toward low complexity. The residue at position 1202 (Ser-1202) is a Phosphoserine. Over residues 1231 to 1249 (KYKDRGILHPKRGTEDRSD) the composition is skewed to basic and acidic residues. Over residues 1250–1264 (QSSVKSTDSSSYPSP) the composition is skewed to low complexity. Residues Ser-1263, Ser-1267, and Ser-1281 each carry the phosphoserine modification. The 131-residue stretch at 1288-1418 (VRYFIMKSSN…QVGEQLLQLW (131 aa)) folds into the YTH domain. Residues 1294–1296 (KSS), Trp-1310, and Trp-1360 each bind RNA.

It belongs to the DEAD box helicase family. DEAH subfamily. As to quaternary structure, interacts with MEIOC; binds transcripts that regulate the mitotic cell cycle inhibiting progression into metaphase, thereby allowing meiotic prophase to proceed normally. Interacts (via ANK repeats) with XRN1. Interacts with ZCCHC4. Associates with the small ribosomal subunit. Interacts with RBM46.

It localises to the cytoplasm. It is found in the perinuclear region. The enzyme catalyses ATP + H2O = ADP + phosphate + H(+). Its function is as follows. 3'-5' RNA helicase that plays a key role in the male and female germline by promoting transition from mitotic to meiotic divisions in stem cells. Specifically recognizes and binds N6-methyladenosine (m6A)-containing RNAs, a modification present at internal sites of mRNAs and some non-coding RNAs that plays a role in the efficiency of RNA processing and stability. Essential for ensuring a successful progression of the meiotic program in the germline by regulating the level of m6A-containing RNAs. Acts by binding and promoting degradation of m6A-containing mRNAs: the 3'-5' RNA helicase activity is required for this process and RNA degradation may be mediated by XRN1 exoribonuclease. Required for both spermatogenesis and oogenesis. The protein is 3'-5' RNA helicase YTHDC2 of Pongo abelii (Sumatran orangutan).